The chain runs to 547 residues: Glutamyl-tRNA(Gln) amidotransferase subunit B, mitochondrial (547 aa).

The protein belongs to the GatB/GatE family. GatB subfamily. Subunit of the heterotrimeric GatFAB amidotransferase (AdT) complex, composed of A, B and F subunits.

The protein resides in the mitochondrion. It carries out the reaction L-glutamyl-tRNA(Gln) + L-glutamine + ATP + H2O = L-glutaminyl-tRNA(Gln) + L-glutamate + ADP + phosphate + H(+). Its function is as follows. Allows the formation of correctly charged Gln-tRNA(Gln) through the transamidation of misacylated Glu-tRNA(Gln) in the mitochondria. The reaction takes place in the presence of glutamine and ATP through an activated gamma-phospho-Glu-tRNA(Gln). The protein is Glutamyl-tRNA(Gln) amidotransferase subunit B, mitochondrial of Lachancea thermotolerans (strain ATCC 56472 / CBS 6340 / NRRL Y-8284) (Yeast).